The following is a 201-amino-acid chain: Probable chemoreceptor glutamine deamidase CheD 1 (201 aa).

It belongs to the CheD family.

It carries out the reaction L-glutaminyl-[protein] + H2O = L-glutamyl-[protein] + NH4(+). Functionally, probably deamidates glutamine residues to glutamate on methyl-accepting chemotaxis receptors (MCPs), playing an important role in chemotaxis. This is Probable chemoreceptor glutamine deamidase CheD 1 from Geobacter sulfurreducens (strain ATCC 51573 / DSM 12127 / PCA).